Consider the following 42-residue polypeptide: Tachystatin-B1 (42 aa).

3 disulfides stabilise this stretch: Cys-4–Cys-20, Cys-11–Cys-25, and Cys-19–Cys-37.

In terms of tissue distribution, granular hemocytes, small secretory granules.

Its subcellular location is the secreted. Exhibits stronger antimicrobial activity against the Gram-positive bacteria (S.aureus (IC(50) is 7.4 ug/ml)) and fungi (C.albicans (IC(50) is 3.0 ug/ml) and P.pastoris (IC(50) is 0.1 ug/ml)) than Gram-negative bacteria (E.coli no inhibition at 100 ug/ml). Binds to chitin (4.3 uM are required to obtain 50% of binding). Does not cause hemolysis on sheep erythrocytes. Has no blocking activity on the P-type calcium channel. The chain is Tachystatin-B1 from Tachypleus tridentatus (Japanese horseshoe crab).